Consider the following 314-residue polypeptide: tRNA dimethylallyltransferase (314 aa).

An ATP-binding site is contributed by 11-18; sequence GPTGSGKT. 13-18 provides a ligand contact to substrate; that stretch reads TGSGKT. An interaction with substrate tRNA region spans residues 36 to 39; that stretch reads DSMQ.

The protein belongs to the IPP transferase family. Monomer. It depends on Mg(2+) as a cofactor.

It catalyses the reaction adenosine(37) in tRNA + dimethylallyl diphosphate = N(6)-dimethylallyladenosine(37) in tRNA + diphosphate. Functionally, catalyzes the transfer of a dimethylallyl group onto the adenine at position 37 in tRNAs that read codons beginning with uridine, leading to the formation of N6-(dimethylallyl)adenosine (i(6)A). This is tRNA dimethylallyltransferase from Chlamydia muridarum (strain MoPn / Nigg).